The chain runs to 194 residues: Thymidylate kinase (194 aa).

7–14 lines the ATP pocket; it reads GIDTAGKS.

Belongs to the thymidylate kinase family.

The catalysed reaction is dTMP + ATP = dTDP + ADP. Its function is as follows. Phosphorylation of dTMP to form dTDP in both de novo and salvage pathways of dTTP synthesis. The protein is Thymidylate kinase of Nautilia profundicola (strain ATCC BAA-1463 / DSM 18972 / AmH).